We begin with the raw amino-acid sequence, 125 residues long: Large ribosomal subunit protein bL19 (125 aa).

The protein belongs to the bacterial ribosomal protein bL19 family.

Functionally, this protein is located at the 30S-50S ribosomal subunit interface and may play a role in the structure and function of the aminoacyl-tRNA binding site. The sequence is that of Large ribosomal subunit protein bL19 from Ehrlichia ruminantium (strain Gardel).